The following is a 290-amino-acid chain: Elongation factor Ts (290 aa).

Residues Thr79–Val82 form an involved in Mg(2+) ion dislocation from EF-Tu region.

It belongs to the EF-Ts family.

Its subcellular location is the cytoplasm. Functionally, associates with the EF-Tu.GDP complex and induces the exchange of GDP to GTP. It remains bound to the aminoacyl-tRNA.EF-Tu.GTP complex up to the GTP hydrolysis stage on the ribosome. The chain is Elongation factor Ts from Pseudoalteromonas atlantica (strain T6c / ATCC BAA-1087).